We begin with the raw amino-acid sequence, 100 residues long: NADH-quinone oxidoreductase subunit K 2 (100 aa).

3 consecutive transmembrane segments (helical) span residues 4–24 (LWWFIVLGVVLFVIGAAGVLL), 28–48 (ILVVLMSLELLLNSVNINFIA), and 60–80 (IFAIFVIAITAAEVAVALGIL).

It belongs to the complex I subunit 4L family. NDH-1 is composed of 14 different subunits. Subunits NuoA, H, J, K, L, M, N constitute the membrane sector of the complex.

It localises to the cell inner membrane. The catalysed reaction is a quinone + NADH + 5 H(+)(in) = a quinol + NAD(+) + 4 H(+)(out). Its function is as follows. NDH-1 shuttles electrons from NADH, via FMN and iron-sulfur (Fe-S) centers, to quinones in the respiratory chain. The immediate electron acceptor for the enzyme in this species is believed to be ubiquinone. Couples the redox reaction to proton translocation (for every two electrons transferred, four hydrogen ions are translocated across the cytoplasmic membrane), and thus conserves the redox energy in a proton gradient. The chain is NADH-quinone oxidoreductase subunit K 2 from Rhizobium etli (strain CIAT 652).